Consider the following 510-residue polypeptide: ETS translocation variant 5 (510 aa).

A disordered region spans residues lysine 132–arginine 245. Low complexity predominate over residues threonine 163–proline 174. The span at glutamine 211–glutamate 224 shows a compositional bias: polar residues. Phosphoserine is present on serine 248. Lysine 350 participates in a covalent cross-link: Glycyl lysine isopeptide (Lys-Gly) (interchain with G-Cter in SUMO2). A DNA-binding region (ETS) is located at residues leucine 368–valine 448.

The protein belongs to the ETS family. As to quaternary structure, interacts (via C-terminal) with ZMYM5 (via N-terminal 120 amino acid region). In terms of tissue distribution, in the brain, expressed predominantly in the cerebral cortex, the amygdala and the hypothalamus. Within the cerebral cortex, there is conspicuously high expression in cortical layers 2, 4 and 6 while expression is almost absent from layers 1, 3 and 5. High expression is also observed in the dorsal and ventral endopiriform claustrum. Strong expression is observed in limited parts of the amygdala including the basolateral amygdaloid nucleus, the bed stria terminalis and the central amygdaloid nucleus. Low to moderate levels are found in the hypothalamus while expression is almost absent in the thalamus. Hypothalamic expression is seen in the dorsomedial hypothalamic nucleus and also the central, dorsomedial and ventrolateral parts of the ventromedial hypothalamic nucleus. Strong expression is also identified in the nigrostriatal tract. In the mesencephalon, expression is restricted to the ventral tegmental area including the parabrachial pigmented nucleus. In the hippocampus, strongly expressed in the pyramidal cell layer. Some expression is also found in the lacunosum moleculare layer. Low levels of expression in the cerebellum, including the granular, molecular and Purkinje cell layers.

It localises to the nucleus. Its function is as follows. Binds to DNA sequences containing the consensus nucleotide core sequence 5'-GGAA.-3'. The chain is ETS translocation variant 5 (Etv5) from Mus musculus (Mouse).